We begin with the raw amino-acid sequence, 573 residues long: Sulfite reductase [NADPH] hemoprotein beta-component (573 aa).

The segment at Met1 to Lys20 is disordered. The [4Fe-4S] cluster site is built by Cys438, Cys444, Cys483, and Cys487. Cys487 provides a ligand contact to siroheme.

It belongs to the nitrite and sulfite reductase 4Fe-4S domain family. In terms of assembly, alpha(8)-beta(8). The alpha component is a flavoprotein, the beta component is a hemoprotein. Requires siroheme as cofactor. The cofactor is [4Fe-4S] cluster.

The catalysed reaction is hydrogen sulfide + 3 NADP(+) + 3 H2O = sulfite + 3 NADPH + 4 H(+). The protein operates within sulfur metabolism; hydrogen sulfide biosynthesis; hydrogen sulfide from sulfite (NADPH route): step 1/1. Its function is as follows. Component of the sulfite reductase complex that catalyzes the 6-electron reduction of sulfite to sulfide. This is one of several activities required for the biosynthesis of L-cysteine from sulfate. The chain is Sulfite reductase [NADPH] hemoprotein beta-component from Geobacillus kaustophilus (strain HTA426).